A 953-amino-acid chain; its full sequence is Nucleotide-binding oligomerization domain-containing protein 1 (953 aa).

The 91-residue stretch at 15–105 (ESHPHIQLLK…AYVDLRPWLL (91 aa)) folds into the CARD domain. Positions 196–531 (ETIFILGDAG…AFFTAFFLVL (336 aa)) constitute an NACHT domain. Position 202-209 (202-209 (GDAGVGKS)) interacts with ATP. Residues Cys558 and Cys567 are each lipidated (S-palmitoyl cysteine). LRR repeat units follow at residues 632 to 656 (LKSL…IWML), 702 to 725 (FPKR…ELQP), 727 to 750 (FSRL…VLSE), 755 to 778 (YKIV…YVTK), 783 to 806 (CKGL…YLAL), 839 to 862 (HPSL…SLAR), 867 to 891 (NTSL…LAEM), 895 to 918 (NQTL…QLAD), and 923 to 946 (NTGI…VYED). Residue Cys952 is the site of S-palmitoyl cysteine attachment.

The protein belongs to the NOD1-NOD2 family. As to quaternary structure, homooligomer: homooligomerizes following ligand-binding, promoting RIPK2 recruitment. Interacts (via CARD domain) with RIPK2 (via CARD domain). Following RIPK2 recruitment, RIPK2 homooligomerizes via its CARD domain and forms long filaments named RIPosomes. Interacts with ARHGEF2. Interacts (via CARD domain) with ubiquitin; inhibiting interaction with RIPK2. Interacts with NLRP10 and recruits it to the cell membrane following invasive bacterial infection. Interacts with IFIH1; this interaction promotes transcription of antiviral genes and inhibition of viral replication. Interacts with IRGM; promoting NOD1 degradation. Interacts with ATG16L1. Post-translationally, palmitoylated. Palmitoylation is required for proper recruitment to the bacterial entry site and hence for proper signaling upon cognate peptidoglycan detection. In terms of processing, ubiquitinated. 'Lys-48'-linked polyubiquitination by RNF34 promotes proteasomal degradation and thereby negatively regulates NOD1 for instance in NF-kappa-B activation. Degraded via selective autophagy following interaction with IRGM. IRGM promotes NOD1-RIPK2 RIPosome recruitment to autophagosome membranes, promoting their SQSTM1/p62-dependent autophagic degradation. Highly expressed in adult heart, skeletal muscle, pancreas, spleen and ovary. Also detected in placenta, lung, liver, kidney, thymus, testis, small intestine and colon.

It is found in the cell membrane. It localises to the apical cell membrane. The protein localises to the basolateral cell membrane. The protein resides in the cytoplasm. Its function is as follows. Pattern recognition receptor (PRR) that detects bacterial peptidoglycan fragments and other danger signals and thus participates in both innate and adaptive immune responses. Specifically recognizes and binds gamma-D-glutamyl-meso-diaminopimelic acid (iE-DAP), a dipeptide present in peptidoglycan of Gram-negative bacteria. Preferentially binds iE-DAP in tripeptide-containing muropeptides (MurNAc-TriDAP or TriDAP). Ligand binding triggers oligomerization that facilitates the binding and subsequent activation of the proximal adapter receptor-interacting RIPK2. Following recruitment, RIPK2 undergoes 'Met-1'- (linear) and 'Lys-63'-linked polyubiquitination by E3 ubiquitin-protein ligases XIAP, BIRC2, BIRC3 and the LUBAC complex, becoming a scaffolding protein for downstream effectors, triggering activation of the NF-kappa-B and MAP kinases signaling. This in turn leads to the transcriptional activation of hundreds of genes involved in immune response. Also acts as a regulator of antiviral response elicited by dsRNA and the expression of RLR pathway members by targeting IFIH1 and TRAF3 to modulate the formation of IFIH1-MAVS and TRAF3-MAVS complexes leading to increased transcription of type I IFNs. Also acts as a regulator of autophagy via its interaction with ATG16L1, possibly by recruiting ATG16L1 at the site of bacterial entry. Besides recognizing pathogens, also involved in the endoplasmic reticulum stress response: acts by sensing and binding to the cytosolic metabolite sphingosine-1-phosphate generated in response to endoplasmic reticulum stress, initiating an inflammation process that leads to activation of the NF-kappa-B and MAP kinases signaling. In addition, plays a role in insulin trafficking in beta cells in a cell-autonomous manner. Mechanistically, upon recognizing cognate ligands, NOD1 and RIPK2 localize to insulin vesicles where they recruit RAB1A to direct insulin trafficking through the cytoplasm. In terms of biological role, in contrast to isoform 1, does not efficiently recognize and bind gamma-D-glutamyl-meso-diaminopimelic acid (iE-DAP) ligand. The sequence is that of Nucleotide-binding oligomerization domain-containing protein 1 from Homo sapiens (Human).